The following is a 414-amino-acid chain: Imidazolonepropionase (414 aa).

The span at 1–20 shows a compositional bias: polar residues; the sequence is MSHQLFRNTRIYSPMDSGQP. The tract at residues 1-26 is disordered; sequence MSHQLFRNTRIYSPMDSGQPSAGKAQ. Positions 81 and 83 each coordinate Fe(3+). Zn(2+)-binding residues include His-81 and His-83. 3 residues coordinate 4-imidazolone-5-propanoate: Arg-90, Tyr-153, and His-186. Tyr-153 lines the N-formimidoyl-L-glutamate pocket. A Fe(3+)-binding site is contributed by His-251. His-251 is a Zn(2+) binding site. Residue Glu-254 participates in 4-imidazolone-5-propanoate binding. Asp-325 serves as a coordination point for Fe(3+). Asp-325 lines the Zn(2+) pocket. N-formimidoyl-L-glutamate is bound by residues Asn-327 and Gly-329. Ser-330 is a binding site for 4-imidazolone-5-propanoate.

This sequence belongs to the metallo-dependent hydrolases superfamily. HutI family. Zn(2+) is required as a cofactor. Requires Fe(3+) as cofactor.

It localises to the cytoplasm. It catalyses the reaction 4-imidazolone-5-propanoate + H2O = N-formimidoyl-L-glutamate. It participates in amino-acid degradation; L-histidine degradation into L-glutamate; N-formimidoyl-L-glutamate from L-histidine: step 3/3. Its function is as follows. Catalyzes the hydrolytic cleavage of the carbon-nitrogen bond in imidazolone-5-propanoate to yield N-formimidoyl-L-glutamate. It is the third step in the universal histidine degradation pathway. In Desulfotalea psychrophila (strain LSv54 / DSM 12343), this protein is Imidazolonepropionase.